The following is a 398-amino-acid chain: Argininosuccinate synthase (398 aa).

9 to 17 contributes to the ATP binding site; sequence AYSGGLDTS. Residue tyrosine 85 coordinates L-citrulline. Glycine 115 provides a ligand contact to ATP. Residues threonine 117, asparagine 121, and aspartate 122 each contribute to the L-aspartate site. An L-citrulline-binding site is contributed by asparagine 121. The L-citrulline site is built by arginine 125, serine 173, glutamate 258, and tyrosine 270.

The protein belongs to the argininosuccinate synthase family. Type 1 subfamily. As to quaternary structure, homotetramer.

Its subcellular location is the cytoplasm. The enzyme catalyses L-citrulline + L-aspartate + ATP = 2-(N(omega)-L-arginino)succinate + AMP + diphosphate + H(+). It functions in the pathway amino-acid biosynthesis; L-arginine biosynthesis; L-arginine from L-ornithine and carbamoyl phosphate: step 2/3. This chain is Argininosuccinate synthase, found in Streptococcus pneumoniae (strain ATCC BAA-255 / R6).